We begin with the raw amino-acid sequence, 313 residues long: Acetyl-coenzyme A carboxylase carboxyl transferase subunit beta, chloroplastic (313 aa).

The 267-residue stretch at 47–313 folds into the CoA carboxyltransferase N-terminal domain; sequence LWTRCDNCEN…SAPCRRSNNS (267 aa). Positions 51, 54, 70, and 73 each coordinate Zn(2+). A C4-type zinc finger spans residues 51–73; the sequence is CDNCENMLYIRFLRQNKRICEEC.

It belongs to the AccD/PCCB family. As to quaternary structure, acetyl-CoA carboxylase is a heterohexamer composed of biotin carboxyl carrier protein, biotin carboxylase and 2 subunits each of ACCase subunit alpha and ACCase plastid-coded subunit beta (accD). The cofactor is Zn(2+).

The protein localises to the plastid. Its subcellular location is the chloroplast stroma. It catalyses the reaction N(6)-carboxybiotinyl-L-lysyl-[protein] + acetyl-CoA = N(6)-biotinyl-L-lysyl-[protein] + malonyl-CoA. It functions in the pathway lipid metabolism; malonyl-CoA biosynthesis; malonyl-CoA from acetyl-CoA: step 1/1. In terms of biological role, component of the acetyl coenzyme A carboxylase (ACC) complex. Biotin carboxylase (BC) catalyzes the carboxylation of biotin on its carrier protein (BCCP) and then the CO(2) group is transferred by the transcarboxylase to acetyl-CoA to form malonyl-CoA. In Anthoceros angustus (Hornwort), this protein is Acetyl-coenzyme A carboxylase carboxyl transferase subunit beta, chloroplastic.